The primary structure comprises 348 residues: N-formyl peptide receptor 2 (348 aa).

Residue Asn-1 is glycosylated (N-linked (GlcNAc...) asparagine). The Extracellular segment spans residues 1-24 (NFSTPLNEHEEVSYESAGYTVLRI). A helical membrane pass occupies residues 25–47 (LPLVVLGVTFVLGVLGNGLVIWV). Topologically, residues 48 to 58 (AGFRMTRTVTT) are cytoplasmic. Residues 59–80 (ICYLNLALADFSFTATLPFLIV) form a helical membrane-spanning segment. Residues 81 to 97 (SMAMGEKWPFGWFLCKL) lie on the Extracellular side of the membrane. A disulfide bridge connects residues Cys-95 and Cys-173. Residues 98-118 (IHIVVDINLFGSVFLIGFIAL) traverse the membrane as a helical segment. The Cytoplasmic portion of the chain corresponds to 119-137 (DRCICVLHPVWAQNHRTVS). Residues 138–159 (LAMKVIVGPWILALVLTLPVFL) form a helical membrane-spanning segment. The Extracellular portion of the chain corresponds to 160 to 202 (FLTTVTIPNGDTYCTFNFASWGGTPEERQKVAITMLTARGIIR). A helical transmembrane segment spans residues 203–223 (FVIGFSLPMSIVAICYGLIAA). Residues 224 to 239 (KIHKKGMIKSSRPLRV) lie on the Cytoplasmic side of the membrane. Residues 240–263 (LTAVVASFFICWFPFQLVALLGTV) form a helical membrane-spanning segment. Residues 264-283 (WLKEMLFYGKYKIIDILVNP) are Extracellular-facing. The chain crosses the membrane as a helical span at residues 284 to 303 (TSSLAFFNSCLNPMLYVFVG). The Cytoplasmic segment spans residues 304–348 (QDFRERLIHSLPTSLERALSEDSAPTNDTAASCASPPAETELQAM). Residues 323–348 (SEDSAPTNDTAASCASPPAETELQAM) form a disordered region. Residues 326 to 335 (SAPTNDTAAS) are compositionally biased toward polar residues.

This sequence belongs to the G-protein coupled receptor 1 family. In terms of assembly, interacts with APP; the interaction takes place at the cell surface and the complex is then rapidly internalized.

Its subcellular location is the cell membrane. Low affinity receptor for N-formyl-methionyl peptides, which are powerful neutrophil chemotactic factors. Binding of FMLP to the receptor causes activation of neutrophils. This response is mediated via a G-protein that activates a phosphatidylinositol-calcium second messenger system. Receptor for the chemokine-like protein FAM19A5, mediating FAM19A5-stimulated macrophage chemotaxis and the inhibitory effect on TNFSF11/RANKL-induced osteoclast differentiation. In Gorilla gorilla gorilla (Western lowland gorilla), this protein is N-formyl peptide receptor 2 (FPR2).